Here is a 425-residue protein sequence, read N- to C-terminus: Cysteate synthase (425 aa).

Position 106 is an N6-(pyridoxal phosphate)lysine (K106). Pyridoxal 5'-phosphate-binding residues include N132 and T382.

It belongs to the threonine synthase family. Cysteate synthase subfamily. In terms of assembly, homotrimer. Pyridoxal 5'-phosphate is required as a cofactor.

It carries out the reaction O-phospho-L-serine + sulfite + H(+) = L-cysteate + phosphate. It participates in cofactor biosynthesis; coenzyme M biosynthesis. Functionally, specifically catalyzes the beta-elimination of phosphate from L-phosphoserine and the beta-addition of sulfite to the dehydroalanine intermediate to produce L-cysteate. In Methanosphaerula palustris (strain ATCC BAA-1556 / DSM 19958 / E1-9c), this protein is Cysteate synthase.